The primary structure comprises 603 residues: Proline--tRNA ligase (603 aa).

Belongs to the class-II aminoacyl-tRNA synthetase family. ProS type 1 subfamily. Homodimer.

It localises to the cytoplasm. The catalysed reaction is tRNA(Pro) + L-proline + ATP = L-prolyl-tRNA(Pro) + AMP + diphosphate. Its function is as follows. Catalyzes the attachment of proline to tRNA(Pro) in a two-step reaction: proline is first activated by ATP to form Pro-AMP and then transferred to the acceptor end of tRNA(Pro). As ProRS can inadvertently accommodate and process non-cognate amino acids such as alanine and cysteine, to avoid such errors it has two additional distinct editing activities against alanine. One activity is designated as 'pretransfer' editing and involves the tRNA(Pro)-independent hydrolysis of activated Ala-AMP. The other activity is designated 'posttransfer' editing and involves deacylation of mischarged Ala-tRNA(Pro). The misacylated Cys-tRNA(Pro) is not edited by ProRS. This chain is Proline--tRNA ligase, found in Paenarthrobacter aurescens (strain TC1).